The following is an 831-amino-acid chain: Translation initiation factor IF-2 (831 aa).

Residues 1-11 (MADEIKKENAP) are compositionally biased toward basic and acidic residues. A disordered region spans residues 1–236 (MADEIKKENA…GKHAKKASAL (236 aa)). Residues 22-31 (TTVSGTSTTG) are compositionally biased toward low complexity. Basic and acidic residues-rich tracts occupy residues 49–150 (DLER…RYAD) and 157–166 (DNGKLDDYSD). The segment covering 190–200 (RSKNKVVKAKK) has biased composition (basic residues). Basic and acidic residues predominate over residues 201–225 (GGRDDENGNKNERQSDRRNQKDVKG). Positions 330–500 (HRAPVVTIMG…LLQSEVLELT (171 aa)) constitute a tr-type G domain. The G1 stretch occupies residues 339–346 (GHVDHGKT). Residue 339-346 (GHVDHGKT) coordinates GTP. The interval 364-368 (GITQH) is G2. The tract at residues 386 to 389 (DTPG) is G3. GTP contacts are provided by residues 386–390 (DTPGH) and 440–443 (NKID). Positions 440–443 (NKID) are G4. The G5 stretch occupies residues 476–478 (SAK).

The protein belongs to the TRAFAC class translation factor GTPase superfamily. Classic translation factor GTPase family. IF-2 subfamily.

It is found in the cytoplasm. One of the essential components for the initiation of protein synthesis. Protects formylmethionyl-tRNA from spontaneous hydrolysis and promotes its binding to the 30S ribosomal subunits. Also involved in the hydrolysis of GTP during the formation of the 70S ribosomal complex. This chain is Translation initiation factor IF-2, found in Histophilus somni (strain 2336) (Haemophilus somnus).